The chain runs to 245 residues: MYPVDLHMHTVASTHAYSTLSDYIAQAKQKGIKLFAITDHGPDMEDAPHHWHFINMRIWPRVVDGVGILRGIEANIKNVDGEIDCSGKMFDSLDLIIAGFHEPVFAPHDKATNTKAMIATIASGNVHIISHPGNPRYPIDFKAVSEAAVKHQVALEINNSSFLHSRKGSEDNCRAVAAAVRDAGGWVALGSDSHTAFTMGEFEECLKILDAVDFPPERILNVSPRRLLNFLESRGMAPIAEFADL.

Zn(2+) is bound by residues His7, His9, His15, His40, Glu73, His101, His131, Asp192, and His194.

This sequence belongs to the PHP family. As to quaternary structure, homotrimer. Zn(2+) serves as cofactor.

This Escherichia coli O127:H6 (strain E2348/69 / EPEC) protein is Probable phosphatase YcdX.